The primary structure comprises 289 residues: Ribosomal protein L11 methyltransferase (289 aa).

Residues Thr-142, Gly-163, Asp-185, and Asn-226 each coordinate S-adenosyl-L-methionine.

Belongs to the methyltransferase superfamily. PrmA family.

It localises to the cytoplasm. It catalyses the reaction L-lysyl-[protein] + 3 S-adenosyl-L-methionine = N(6),N(6),N(6)-trimethyl-L-lysyl-[protein] + 3 S-adenosyl-L-homocysteine + 3 H(+). Its function is as follows. Methylates ribosomal protein L11. The sequence is that of Ribosomal protein L11 methyltransferase from Legionella pneumophila (strain Corby).